The following is a 397-amino-acid chain: ORC1-type DNA replication protein 8 (397 aa).

Residues 61-65, Y211, and R223 each bind ATP; that span reads VGKTA.

It belongs to the CDC6/cdc18 family.

Involved in regulation of DNA replication. This is ORC1-type DNA replication protein 8 (orc8) from Halobacterium salinarum (strain ATCC 700922 / JCM 11081 / NRC-1) (Halobacterium halobium).